Here is a 359-residue protein sequence, read N- to C-terminus: Nicotinate-nucleotide--dimethylbenzimidazole phosphoribosyltransferase (359 aa).

Residue Glu318 is the Proton acceptor of the active site.

The protein belongs to the CobT family. Homodimer.

It carries out the reaction 5,6-dimethylbenzimidazole + nicotinate beta-D-ribonucleotide = alpha-ribazole 5'-phosphate + nicotinate + H(+). Its pathway is nucleoside biosynthesis; alpha-ribazole biosynthesis; alpha-ribazole from 5,6-dimethylbenzimidazole: step 1/2. Catalyzes the synthesis of alpha-ribazole-5'-phosphate from nicotinate mononucleotide (NAMN) and 5,6-dimethylbenzimidazole (DMB). In Escherichia coli (strain ATCC 8739 / DSM 1576 / NBRC 3972 / NCIMB 8545 / WDCM 00012 / Crooks), this protein is Nicotinate-nucleotide--dimethylbenzimidazole phosphoribosyltransferase.